The chain runs to 321 residues: Ribosomal RNA small subunit methyltransferase H (321 aa).

S-adenosyl-L-methionine contacts are provided by residues glycine 40–histidine 42, aspartate 60, phenylalanine 84, aspartate 106, and glutamine 113.

The protein belongs to the methyltransferase superfamily. RsmH family.

It is found in the cytoplasm. It carries out the reaction cytidine(1402) in 16S rRNA + S-adenosyl-L-methionine = N(4)-methylcytidine(1402) in 16S rRNA + S-adenosyl-L-homocysteine + H(+). Specifically methylates the N4 position of cytidine in position 1402 (C1402) of 16S rRNA. The sequence is that of Ribosomal RNA small subunit methyltransferase H from Haemophilus influenzae (strain ATCC 51907 / DSM 11121 / KW20 / Rd).